Reading from the N-terminus, the 338-residue chain is Probable cytosolic iron-sulfur protein assembly protein Ciao1 (338 aa).

WD repeat units lie at residues 12–51 (GHRGRVWGAGWHPRDPVLATCGEDKTIRIWADDGTGRWVP), 58–97 (GHTRTIRDVAWSPCGRFLASASFDATVAIWDRRSGEFECN), 102–141 (GHENEVKSVSWSKSGALLATCSRDKSVWIWEVAQEDEYEC), 147–186 (THSQDVKKVEWHPNEDVLASASYDNTIQLYREDLADSDWS), 193–232 (SHDSTVWSIAFDASGSRLASCSDDQTVRIWQEYKPGNEFG), 234–252 (ACPDGKTPVWKCVCTLSGF), 253–291 (HSRAVYDISWCKKTGLIATACGDDMVRIFREVAGSPANE), and 302–338 (AHSQDANTVEWSPTVAGLLVTTSDDGDVKLWKFEDDE).

The protein belongs to the WD repeat CIA1 family.

Functionally, essential component of the cytosolic iron-sulfur (Fe/S) protein assembly machinery. Required for the maturation of extramitochondrial Fe/S proteins. The protein is Probable cytosolic iron-sulfur protein assembly protein Ciao1 of Culex quinquefasciatus (Southern house mosquito).